Here is a 3019-residue protein sequence, read N- to C-terminus: Genome polyprotein (3019 aa).

N-acetylserine; by host is present on serine 2. An interaction with STAT1 region spans residues 2–23 (STLPKPQRITKRNINRRPQDVK). The tract at residues 2–58 (STLPKPQRITKRNINRRPQDVKFPGGGQIVGGVYVLPRRGPKLGVRAVRKTSERSQP) is interaction with EIF2AK2/PKR. The interaction with DDX3X stretch occupies residues 2-59 (STLPKPQRITKRNINRRPQDVKFPGGGQIVGGVYVLPRRGPKLGVRAVRKTSERSQPR). A disordered region spans residues 2–75 (STLPKPQRIT…PRARRTEGRS (74 aa)). Residues 2-168 (STLPKPQRIT…EDGINFATGN (167 aa)) are Cytoplasmic-facing. 2 short sequence motifs (nuclear localization signal) span residues 5–13 (PKPQRITKR) and 38–43 (PRRGPK). Residue serine 53 is modified to Phosphoserine; by host. 2 consecutive short sequence motifs (nuclear localization signal) follow at residues 58-64 (PRSRRQP) and 66-71 (PRARRT). Over residues 58–68 (PRSRRQPIPRA) the composition is skewed to basic residues. Residues serine 99 and serine 116 each carry the phosphoserine; by host modification. The segment at 112–152 (PRRRSRNLGKVIDTLTCGFADLMGYIPLVGAPVGGVARALA) is important for endoplasmic reticulum and mitochondrial localization. The segment at 122–173 (VIDTLTCGFADLMGYIPLVGAPVGGVARALAHGVRALEDGINFATGNLPGCS) is interaction with APOA2. The segment at 164-167 (FATG) is important for lipid droplets localization. A helical membrane pass occupies residues 169–189 (LPGCSFSIFLLALLSCLLTPT). Residues 178-191 (LLALLSCLLTPTAG) constitute a propeptide, ER anchor for the core protein, removed in mature form by host signal peptidase. Residues 190 to 358 (AGLEYRNASG…IGAHWGVMAG (169 aa)) are Lumenal-facing. N-linked (GlcNAc...) asparagine; by host glycosylation is found at asparagine 196, asparagine 209, and asparagine 234. The tract at residues 265-296 (MVGAATLCSALYVGDLCGALFLVGQGFSWRHR) is important for fusion. N-linked (GlcNAc...) asparagine; by host glycosylation is present at asparagine 305. A helical membrane pass occupies residues 359-379 (VAYYSMQGNWAKVFLVLCLFS). At 380 to 730 (GVDASTTITG…WEFVILIFLL (351 aa)) the chain is on the lumenal side. The HVR1 stretch occupies residues 385 to 412 (TTITGGVAASGAFTITSLFSTGAKQPLH). N-linked (GlcNAc...) (high mannose) asparagine; by host glycosylation is found at asparagine 417, asparagine 423, and asparagine 430. Cystine bridges form between cysteine 429/cysteine 553, cysteine 452/cysteine 459, cysteine 487/cysteine 495, and cysteine 504/cysteine 509. Asparagine 448 carries N-linked (GlcNAc...) asparagine; by host glycosylation. The interval 475–479 (ANISG) is HVR2. N-linked (GlcNAc...) asparagine; by host glycosylation occurs at asparagine 476. The CD81-binding 1 stretch occupies residues 481-494 (SSEKPYCWHYAPRP). Asparagine 533 carries an N-linked (GlcNAc...) asparagine; by host glycan. Residues 545-552 (PPTEPWFG) are CD81-binding 2. An N-linked (GlcNAc...) asparagine; by host glycan is attached at asparagine 557. 4 cysteine pairs are disulfide-bonded: cysteine 565-cysteine 570, cysteine 586-cysteine 590, cysteine 602-cysteine 625, and cysteine 612-cysteine 649. N-linked (GlcNAc...) (high mannose) asparagine; by host glycosylation is found at asparagine 628 and asparagine 650. Cysteine 657 and cysteine 682 are disulfide-bonded. The interval 665–676 (SEMYPLLHSTTE) is PKR/eIF2-alpha phosphorylation homology domain (PePHD). Residues 731 to 751 (LADARVCVVLWMMMLISQAEA) traverse the membrane as a helical segment. The Lumenal portion of the chain corresponds to 752 to 762 (ALENLIVLNAI). Residues 763–783 (SAAGTHGIWWSLVAFCVAWHV) traverse the membrane as a helical segment. The Cytoplasmic portion of the chain corresponds to 784–786 (RGR). A helical transmembrane segment spans residues 787 to 808 (IFPIAVYSIVGLWPLLLLVLML). Over 809-818 (PYRAYAWTGT) the chain is Lumenal. A helical transmembrane segment spans residues 819–839 (DTSTLGAGVLSLFALFTLSPW). Topologically, residues 840–843 (YKHW) are cytoplasmic. A helical transmembrane segment spans residues 844–863 (IARLIWWNQYTIARCEAALQ). Over 864 to 886 (IWVPPLLARGARDGIILLAGLFY) the chain is Lumenal. Residues 887-907 (PALVFDITKLLLAILGPLYIL) form a helical membrane-spanning segment. One can recognise a Peptidase C18 domain in the interval 908–1031 (QASLVRVPYF…DYRSMGWRLL (124 aa)). The Cytoplasmic segment spans residues 908-1662 (QASLVRVPYF…CMAADLEVAT (755 aa)). The interval 909 to 1211 (ASLVRVPYFV…PVESLSAQTR (303 aa)) is protease NS2-3. Cysteine 927 is lipidated: S-palmitoyl cysteine; by host. The tract at residues 934-954 (TGGKYVQMVLLALARGFNTYL) is interaction with host SCPS1. Catalysis depends on for protease NS2 activity; shared with dimeric partner residues histidine 957, glutamate 977, and cysteine 998. In terms of domain architecture, Peptidase S29 spans 1032–1213 (APITAHAQQT…ESLSAQTRSP (182 aa)). Residues histidine 1088 and aspartate 1112 each act as charge relay system; for serine protease NS3 activity in the active site. Cysteine 1128 and cysteine 1130 together coordinate Zn(2+). Residue serine 1170 is the Charge relay system; for serine protease NS3 activity of the active site. Zn(2+)-binding residues include cysteine 1176 and histidine 1180. 1235-1242 (APTGSGES) is a binding site for ATP. Mg(2+) contacts are provided by serine 1242 and glutamate 1322. The DECH box motif lies at 1321–1324 (DECH). Residues 1366 to 1543 (NIEEVALTGE…ELTPSETTVR (178 aa)) enclose the Helicase C-terminal domain. The interval 1482-1505 (VPQDAVSRSQRRGRTGRGKSGTYR) is disordered. The interval 1491–1503 (QRRGRTGRGKSGT) is RNA-binding. The helical transmembrane segment at 1663–1683 (SAWVLLGGVMAALTAYCLSVG) threads the bilayer. The tract at residues 1684–1695 (SVVIVGHLVLGG) is NS3-binding. Topologically, residues 1684 to 1810 (SVVIVGHLVL…SVTSPLTTNQ (127 aa)) are cytoplasmic. Residues 1811–1829 (TLLFNIMGGWVASNLAPPP) form a helical membrane-spanning segment. At 1830–1833 (ASTA) the chain is on the lumenal side. A helical membrane pass occupies residues 1834-1854 (FVVSGLAGAAVGSIGLGKVLL). Residue aspartate 1855 is a topological domain, cytoplasmic. A helical membrane pass occupies residues 1856 to 1876 (ILAGYGAGVAGALVAFKIMGG). Residues 1877–1886 (EMPSTEDMVN) are Lumenal-facing. Residues 1887-1907 (LLPAILSPGALVVGVICAAIL) form a helical membrane-spanning segment. Over 1908–1977 (RRHVGPGEGA…WINEDYPTPC (70 aa)) the chain is Cytoplasmic. Cysteine 1977 carries the S-palmitoyl cysteine; by host lipid modification. Residues 1978-2007 (DGNWLYDIWNWVCTVLADFKLWLGAKILPK) lie within the membrane without spanning it. Topologically, residues 2008–2998 (MPGIPFLSCQ…YHSVSRARSR (991 aa)) are cytoplasmic. The Zn(2+) site is built by cysteine 2016, cysteine 2034, cysteine 2036, and cysteine 2057. The tract at residues 2125–2213 (EFFTELDGVR…ASSSASQLSA (89 aa)) is FKBP8-binding. Residues 2125-2337 (EFFTELDGVR…PVPPPRRKRT (213 aa)) form a transcriptional activation region. Positions 2140 to 2144 (PVCRP) are interaction with non-structural protein 4A. Positions 2191 to 2225 (AKRRLDRGSPPSLASSSASQLSAPSRKATCTTHGR) are disordered. The interval 2194 to 2446 (RLDRGSPPSL…ALITPCAAEE (253 aa)) is interaction with host SKP2. Serine 2199, serine 2202, serine 2206, serine 2209, serine 2212, and serine 2215 each carry phosphoserine; by host. Low complexity predominate over residues 2199–2215 (SPPSLASSSASQLSAPS). Residues 2215-2254 (SRKATCTTHGRHPDAELITANLLWRQEMGSNITRVESESK) form an ISDR region. Positions 2215–2280 (SRKATCTTHG…DELSVAAECF (66 aa)) are interaction with EIF2AK2/PKR. The interval 2254–2311 (KVVILDSFEPLRACDDEDELSVAAECFKKPPKYPPALPIWARPDYNPPLVEPWKDPDY) is NS4B-binding. The interval 2304–2382 (EPWKDPDYVP…GTQSGSLTGP (79 aa)) is V3. The short motif at 2327-2330 (PPVP) is the SH3-binding element. Positions 2332–2340 (PRRKRTIVL) match the Nuclear localization signal motif. Lysine 2355 participates in a covalent cross-link: Glycyl lysine isopeptide (Lys-Gly) (interchain with G-Cter in ubiquitin). Residues 2356-2417 (SFPQPTCSAE…PDLSSGSWST (62 aa)) form a disordered region. Polar residues predominate over residues 2369-2381 (TSGVGTQSGSLTG). Residues serine 2457 and serine 2470 each carry the phosphoserine; by host modification. The 119-residue stretch at 2642 to 2760 (PLGFSYDTRC…IAESAGIDED (119 aa)) folds into the RdRp catalytic domain. Aspartate 2648, aspartate 2746, and aspartate 2747 together coordinate Mg(2+). Residues 2999 to 3019 (HLLLGLLLLTVGVGIFLLPAR) form a helical membrane-spanning segment.

It belongs to the hepacivirus polyprotein family. As to quaternary structure, homooligomer. Interacts with E1 (via C-terminus). Interacts with the non-structural protein 5A. Interacts (via N-terminus) with host STAT1 (via SH2 domain); this interaction results in decreased STAT1 phosphorylation and ubiquitin-mediated proteasome-dependent STAT1 degradation, leading to decreased IFN-stimulated gene transcription. Interacts with host STAT3; this interaction constitutively activates STAT3. Interacts with host LTBR receptor. Interacts with host TNFRSF1A receptor and possibly induces apoptosis. Interacts with host HNRPK. Interacts with host YWHAE. Interacts with host UBE3A/E6AP. Interacts with host DDX3X. Interacts with host APOA2. Interacts with host RXRA protein. Interacts with host SP110 isoform 3/Sp110b; this interaction sequesters the transcriptional corepressor SP110 away from the nucleus. Interacts with host CREB3 nuclear transcription protein; this interaction triggers cell transformation. Interacts with host ACY3. Interacts with host C1QR1. Interacts with host RBM24; this interaction, which enhances the interaction of the mature core protein with 5'-UTR, may inhibit viral translation and favor replication. Interacts with host EIF2AK2/PKR; this interaction induces the autophosphorylation of EIF2AK2. Part of the viral assembly initiation complex composed of NS2, E1, E2, NS3, NS4A, NS5A and the mature core protein. In terms of assembly, forms a heterodimer with envelope glycoprotein E2. Interacts with mature core protein. Interacts with protease NS2. The heterodimer E1/E2 interacts with host CLDN1; this interaction plays a role in viral entry into host cell. Interacts with host SPSB2 (via C-terminus). Part of the viral assembly initiation complex composed of NS2, E1, E2, NS3, NS4A, NS5A and the mature core protein. Interacts with host NEURL3; this interaction prevents E1 binding to glycoprotein E2. Forms a heterodimer with envelope glycoprotein E1. Interacts with host CD81 and SCARB1 receptors; these interactions play a role in viral entry into host cell. Interacts with host EIF2AK2/PKR; this interaction inhibits EIF2AK2 and probably allows the virus to evade the innate immune response. Interacts with host CD209/DC-SIGN and CLEC4M/DC-SIGNR. Interact with host SPCS1; this interaction is essential for viral particle assembly. Interacts with protease NS2. The heterodimer E1/E2 interacts with host CLDN1; this interaction plays a role in viral entry into host cell. Part of the viral assembly initiation complex composed of NS2, E1, E2, NS3, NS4A, NS5A and the mature core protein. Interacts with host SLC3A2/4F2hc; the interaction may facilitate viral entry into host cell. Interacts with human PLSCR1. As to quaternary structure, homohexamer. Homoheptamer. Interacts with protease NS2. In terms of assembly, homodimer. Interacts with host SPCS1; this interaction is essential for viral particle assembly. Interacts with envelope glycoprotein E1. Interacts with envelope glycoprotein E2. Interacts with viroporin p7. Interacts with serine protease/helicase NS3. Part of the replication complex composed of NS2, NS3, NS4A, NS4B, NS5A and the RNA-directed RNA polymerase embedded in an ER-derived membranous web. Part of the viral assembly initiation complex composed of NS2, E1, E2, NS3, NS4A, NS5A and the mature core protein. Interacts with protease NS2. Interacts with non-structural protein 4A; this interaction stabilizes the folding of NS3 serine protease. NS3-NS4A interaction is essential for NS3 activation and allows membrane anchorage of the latter. NS3/NS4A complex also prevents phosphorylation of host IRF3, thus preventing the establishment of dsRNA induced antiviral state. Interacts with host MAVS; this interaction leads to the cleavage and inhibition of host MAVS. Interacts with host TICAM1; this interaction leads to the cleavage and inhibition of host TICAM1. Interacts with host TANK-binding kinase/TBK1; this interaction results in the inhibition of the association between TBK1 and IRF3, which leads to the inhibition of IRF3 activation. Interacts with host RBM24. Part of the replication complex composed of NS2, NS3, NS4A, NS4B, NS5A and the RNA-directed RNA polymerase embedded in an ER-derived membranous web. Part of the viral assembly initiation complex composed of NS2, E1, E2, NS3, NS4A, NS5A and the mature core protein. As to quaternary structure, interacts with NS3 serine protease; this interaction stabilizes the folding of NS3 serine protease. NS3-NS4A interaction is essential for NS3 activation and allows membrane anchorage of the latter. Interacts with non-structural protein 5A (via N-terminus). Part of the replication complex composed of NS2, NS3, NS4A, NS4B, NS5A and the RNA-directed RNA polymerase embedded in an ER-derived membranous web. Part of the viral assembly initiation complex composed of NS2, E1, E2, NS3, NS4A, NS5A and the mature core protein. In terms of assembly, homomultimer. Interacts with non-structural protein NS5A. Interacts with host PLA2G4C; this interaction likely initiates the recruitment of replication complexes to lipid droplets. Interacts with host STING; this interaction disrupts the interaction between STING and TBK1 thereby suppressing the interferon signaling. Part of the replication complex composed of NS2, NS3, NS4A, NS4B, NS5A and the RNA-directed RNA polymerase embedded in an ER-derived membranous web. Monomer. Homodimer; dimerization is required for RNA-binding. Interacts with the mature core protein. Interacts (via N-terminus) with non-structural protein 4A. Interacts with non-structural protein 4B. Interacts (via region D2) with RNA-directed RNA polymerase. Part of the viral assembly initiation complex composed of NS2, E1, E2, NS3, NS4A, NS5A and the mature core protein. Part of the replication complex composed of NS2, NS3, NS4A, NS4B, NS5A and the RNA-directed RNA polymerase embedded in an ER-derived membranous web. Interacts with host GRB2. Interacts with host BIN1. Interacts with host PIK3R1. Interacts with host SRCAP. Interacts with host FKBP8. Interacts (via C-terminus) with host VAPB (via MSP domain). Interacts with host EIF2AK2/PKR; this interaction leads to disruption of EIF2AK2 dimerization by NS5A and probably allows the virus to evade the innate immune response. Interacts (via N-terminus) with host PACSIN2 (via N-terminus); this interaction attenuates protein kinase C alpha-mediated phosphorylation of PACSIN2 by disrupting the interaction between PACSIN2 and PRKCA. Interacts (via N-terminus) with host SRC kinase (via SH2 domain). Interacts with most Src-family kinases. Interacts with host IFI27 and SKP2; promotes the ubiquitin-mediated proteasomal degradation of NS5A. Interacts with host GPS2. Interacts with host TNFRSF21; this interaction allows the modulation by the virus of JNK, p38 MAPK, STAT3, and Akt signaling pathways in a DR6-dependent manner. Interacts (via N-terminus) with host CIDEB (via N-terminus); this interaction seems to regulate the association of HCV particles with APOE. Interacts with host CHKA/Choline Kinase-alpha; CHKA bridges host PI4KA and NS5A and potentiates NS5A-stimulated PI4KA activity, which then facilitates the targeting of the ternary complex to the ER for viral replication. Interacts with host SPSB2 (via C-terminus); this interaction targets NS5A for ubiquitination and degradation. Interacts with host RAB18; this interaction may promote the association of NS5A and other replicase components with lipid droplets. Interacts (via region D2) with host PPIA/CYPA; the interaction stimulates RNA-binding ability of NS5A and is dependent on the peptidyl-prolyl cis-trans isomerase activity of PPIA/CYPA. Interacts with host TRIM14; this interaction induces the degradation of NS5A. As to quaternary structure, homooligomer. Interacts with non-structural protein 5A. Interacts with host VAPB. Interacts with host PRK2/PKN2. Interacts with host HNRNPA1 and SEPT6; these interactions facilitate viral replication. Part of the replication complex composed of NS2, NS3, NS4A, NS4B, NS5A and the RNA-directed RNA polymerase. The cofactor is Zn(2+). Mg(2+) is required as a cofactor. Post-translationally, specific enzymatic cleavages in vivo yield mature proteins. The structural proteins, core, E1, E2 and p7 are produced by proteolytic processing by host signal peptidases. The core protein precursor is synthesized as a 23 kDa, which is retained in the ER membrane through the hydrophobic signal peptide. Cleavage by the signal peptidase releases the 21 kDa mature core protein. The cleavage of the core protein precursor occurs between aminoacids 176 and 188 but the exact cleavage site is not known. Some degraded forms of the core protein appear as well during the course of infection. The other proteins (p7, NS2, NS3, NS4A, NS4B, NS5A and NS5B) are cleaved by the viral proteases. Autoprocessing between NS2 and NS3 is mediated by the NS2 cysteine protease catalytic domain and regulated by the NS3 N-terminal domain. Phosphorylated by host PKC and PKA. In terms of processing, ubiquitinated; mediated by UBE3A and leading to core protein subsequent proteasomal degradation. Post-translationally, highly N-glycosylated. Palmitoylation is required for NS2/3 autoprocessing and E2 recruitment to membranes. In terms of processing, palmitoylated. This modification may play a role in its polymerization or in protein-protein interactions. Post-translationally, phosphorylated on serines in a basal form termed p56. p58 is a hyperphosphorylated form of p56. p56 and p58 coexist in the cell in roughly equivalent amounts. Hyperphosphorylation is dependent on the presence of NS4A. Host CSNK1A1/CKI-alpha or RPS6KB1 kinases may be responsible for NS5A phosphorylation. Tyrosine phosphorylation is essential for the interaction with host SRC. In terms of processing, ubiquitinated. Ubiquitination, most probably at Lys-2355, mediated by host IFI27 and SKP2 leads to proteasomal degradation, restricting viral infection. Ubiquitination by host TRIM22 leads to interruption of viral replication. Post-translationally, the N-terminus is phosphorylated by host PRK2/PKN2.

Its subcellular location is the host endoplasmic reticulum membrane. The protein localises to the host mitochondrion membrane. It is found in the virion. It localises to the host cytoplasm. The protein resides in the host nucleus. Its subcellular location is the host lipid droplet. The protein localises to the virion membrane. It is found in the host mitochondrion. It localises to the host cell membrane. The protein resides in the host perinuclear region. The enzyme catalyses Hydrolysis of four peptide bonds in the viral precursor polyprotein, commonly with Asp or Glu in the P6 position, Cys or Thr in P1 and Ser or Ala in P1'.. It carries out the reaction a ribonucleoside 5'-triphosphate + H2O = a ribonucleoside 5'-diphosphate + phosphate + H(+). It catalyses the reaction ATP + H2O = ADP + phosphate + H(+). The catalysed reaction is RNA(n) + a ribonucleoside 5'-triphosphate = RNA(n+1) + diphosphate. With respect to regulation, inhibited by the antiviral drug hexamethylene amiloride. Inhibition by amantadine appears to be genotype-dependent. Also inhibited by long-alkyl-chain iminosugar derivatives. Activity is up-regulated by PRK2/PKN2-mediated phosphorylation. In terms of biological role, packages viral RNA to form a viral nucleocapsid, and promotes virion budding. Participates in the viral particle production as a result of its interaction with the non-structural protein 5A. Binds RNA and may function as a RNA chaperone to induce the RNA structural rearrangements taking place during virus replication. Modulates viral translation initiation by interacting with viral IRES and 40S ribosomal subunit. Affects various cell signaling pathways, host immunity and lipid metabolism. Prevents the establishment of cellular antiviral state by blocking the interferon-alpha/beta (IFN-alpha/beta) and IFN-gamma signaling pathways and by blocking the formation of phosphorylated STAT1 and promoting ubiquitin-mediated proteasome-dependent degradation of STAT1. Activates STAT3 leading to cellular transformation. Regulates the activity of cellular genes, including c-myc and c-fos. May repress the promoter of p53, and sequester CREB3 and SP110 isoform 3/Sp110b in the cytoplasm. Represses cell cycle negative regulating factor CDKN1A, thereby interrupting an important check point of normal cell cycle regulation. Targets transcription factors involved in the regulation of inflammatory responses and in the immune response: suppresses TNF-induced NF-kappa-B activation, and activates AP-1. Binds to dendritic cells (DCs) via C1QR1, resulting in down-regulation of T-lymphocytes proliferation. Alters lipid metabolism by interacting with hepatocellular proteins involved in lipid accumulation and storage. Induces up-regulation of FAS promoter activity, and thereby contributes to the increased triglyceride accumulation in hepatocytes (steatosis). Forms a heterodimer with envelope glycoprotein E2, which mediates virus attachment to the host cell, virion internalization through clathrin-dependent endocytosis and fusion with host membrane. Fusion with the host cell is most likely mediated by both E1 and E2, through conformational rearrangements of the heterodimer required for fusion rather than a classical class II fusion mechanism. E1/E2 heterodimer binds host apolipoproteins such as APOB and ApoE thereby forming a lipo-viro-particle (LVP). APOE associated to the LVP allows the initial virus attachment to cell surface receptors such as the heparan sulfate proteoglycans (HSPGs), syndecan-1 (SDC1), syndecan-1 (SDC2), the low-density lipoprotein receptor (LDLR) and scavenger receptor class B type I (SCARB1). The cholesterol transfer activity of SCARB1 allows E2 exposure and binding of E2 to SCARB1 and the tetraspanin CD81. E1/E2 heterodimer binding on CD81 activates the epithelial growth factor receptor (EGFR) signaling pathway. Diffusion of the complex E1-E2-EGFR-SCARB1-CD81 to the cell lateral membrane allows further interaction with Claudin 1 (CLDN1) and occludin (OCLN) to finally trigger HCV entry. Its function is as follows. Forms a heterodimer with envelope glycoprotein E1, which mediates virus attachment to the host cell, virion internalization through clathrin-dependent endocytosis and fusion with host membrane. Fusion with the host cell is most likely mediated by both E1 and E2, through conformational rearrangements of the heterodimer required for fusion rather than a classical class II fusion mechanism. The interaction between envelope glycoprotein E2 and host apolipoprotein E/APOE allows the proper assembly, maturation and infectivity of the viral particles. This interaction is probably promoted via the up-regulation of cellular autophagy by the virus. E1/E2 heterodimer binds host apolipoproteins such as APOB and APOE thereby forming a lipo-viro-particle (LVP). APOE associated to the LVP allows the initial virus attachment to cell surface receptors such as the heparan sulfate proteoglycans (HSPGs), syndecan-1 (SDC1), syndecan-1 (SDC2), the low-density lipoprotein receptor (LDLR) and scavenger receptor class B type I (SCARB1). The cholesterol transfer activity of SCARB1 allows E2 exposure and binding of E2 to SCARB1 and the tetraspanin CD81. E1/E2 heterodimer binding on CD81 activates the epithelial growth factor receptor (EGFR) signaling pathway. Diffusion of the complex E1-E2-EGFR-SCARB1-CD81 to the cell lateral membrane allows further interaction with Claudin 1 (CLDN1) and occludin (OCLN) to finally trigger HCV entry. Inhibits host EIF2AK2/PKR activation, preventing the establishment of an antiviral state. Viral ligand for CD209/DC-SIGN and CLEC4M/DC-SIGNR, which are respectively found on dendritic cells (DCs), and on liver sinusoidal endothelial cells and macrophage-like cells of lymph node sinuses. These interactions allow the capture of circulating HCV particles by these cells and subsequent facilitated transmission to permissive cells such as hepatocytes and lymphocyte subpopulations. The interaction between E2 and host amino acid transporter complex formed by SLC3A2 and SLC7A5/LAT1 may facilitate viral entry into host cell. Functionally, ion channel protein that acts as a viroporin and plays an essential role in the assembly, envelopment and secretion of viral particles. Regulates the host cell secretory pathway, which induces the intracellular retention of viral glycoproteins and favors assembly of viral particles. Creates a pore in acidic organelles and releases Ca(2+) and H(+) in the cytoplasm of infected cells, leading to a productive viral infection. High levels of cytoplasmic Ca(2+) may trigger membrane trafficking and transport of viral ER-associated proteins to viroplasms, sites of viral genome replication. This ionic imbalance induces the assembly of the inflammasome complex, which triggers the maturation of pro-IL-1beta into IL-1beta through the action of caspase-1. Targets also host mitochondria and induces mitochondrial depolarization. In addition of its role as a viroporin, acts as a lipid raft adhesion factor. In terms of biological role, cysteine protease required for the proteolytic auto-cleavage between the non-structural proteins NS2 and NS3. The N-terminus of NS3 is required for the function of NS2 protease (active region NS2-3). Promotes the initiation of viral particle assembly by mediating the interaction between structural and non-structural proteins. Displays three enzymatic activities: serine protease with a chymotrypsin-like fold, NTPase and RNA helicase. NS3 serine protease, in association with NS4A, is responsible for the cleavages of NS3-NS4A, NS4A-NS4B, NS4B-NS5A and NS5A-NS5B. The NS3/NS4A complex prevents phosphorylation of host IRF3, thus preventing the establishment of dsRNA induced antiviral state. The NS3/NS4A complex induces host amino acid transporter component SLC3A2, thus contributing to HCV propagation. NS3 RNA helicase binds to RNA and unwinds both dsDNA and dsRNA in the 3' to 5' direction, and likely resolves RNA complicated stable secondary structures in the template strand. Binds a single ATP and catalyzes the unzipping of a single base pair of dsRNA. Inhibits host antiviral proteins TBK1 and IRF3 thereby preventing the establishment of an antiviral state. Cleaves host MAVS/CARDIF thereby preventing the establishment of an antiviral state. Cleaves host TICAM1/TRIF, thereby disrupting TLR3 signaling and preventing the establishment of an antiviral state. Its function is as follows. Induces a specific membrane alteration that serves as a scaffold for the virus replication complex. This membrane alteration gives rise to the so-called ER-derived membranous web that contains the replication complex. NS4B self-interaction contributes to its function in membranous web formation. Promotes host TRIF protein degradation in a CASP8-dependent manner thereby inhibiting host TLR3-mediated interferon signaling. Disrupts the interaction between STING and TBK1 contributing to the inhibition of interferon signaling. Functionally, phosphorylated protein that is indispensable for viral replication and assembly. Both hypo- and hyperphosphorylated states are required for the viral life cycle. The hyperphosphorylated form of NS5A is an inhibitor of viral replication. Involved in RNA-binding and especially in binding to the viral genome. Zinc is essential for RNA-binding. Participates in the viral particle production as a result of its interaction with the mature viral core protein. Its interaction with host VAPB may target the viral replication complex to vesicles. Down-regulates viral IRES translation initiation. Mediates interferon resistance, presumably by interacting with and inhibiting host EIF2AK2/PKR. Prevents BIN1-induced apoptosis. Acts as a transcriptional activator of some host genes important for viral replication when localized in the nucleus. Via the interaction with host PACSIN2, modulates lipid droplet formation in order to promote virion assembly. Modulates TNFRSF21/DR6 signaling pathway for viral propagation. In terms of biological role, RNA-dependent RNA polymerase that performs primer-template recognition and RNA synthesis during viral replication. Initiates RNA transcription/replication at a flavin adenine dinucleotide (FAD), resulting in a 5'- FAD cap on viral RNAs. In this way, recognition of viral 5' RNA by host pattern recognition receptors can be bypassed, thereby evading activation of antiviral pathways. In Homo sapiens (Human), this protein is Genome polyprotein.